We begin with the raw amino-acid sequence, 617 residues long: MSDNQSWNSSGSEEDLETESGPPVERCGVLSKWTNYIHGWQDRWVVLKNNTLSYYKSEDETEYGCRGSICLSKAVITPHEFDECRFDISVNDSVWYLRAQDPDHRQRWIDSIEQHKSESGYGSESSLRRHGSMVSLVSGASGYSATSTSSFKKGHSLREKLAEMETFRDILCRQVDTLQKYFDACADAVSKDELERDKVEDDEDDFLHSHPNGDYIHSSIGSKDKLFQHVSPKGINGIDFKGEAITFKATTAGILATLSHCIDLMVKREDSWQKRLDKEIEKRRRVEEAYKNAMTELKKKSHFGGPDYEEGPNSLINEEEFFDAVEAALDRQDKIEQSQSEKGRSHWPSSLPSTEAYTTAGSHRFVQAPPSCPPPTDLVSSSDEHRFRIQVEEMVQNHMTYSLQDVGGDANWQLVVEEGEMKVYRREVEENGIVLDPLKATHSVKGVTGHEVCQHFWNVDVRNDWETTIENFHVVEKLSPNAIIVYQTHKRVWPASQRDVLYLSAIRMVPAASENEMDTWIVCNFSVDHDNAPLNRCVRAKINIAMICQTLVSPPEGNKEISRDNIQCKITYVANVNPGGWAPASVLRAVAKREYPKFLKRFTSYVQEKTAGKSILF.

The segment covering Met-1 to Gly-11 has biased composition (polar residues). The tract at residues Met-1 to Pro-23 is disordered. Residues Pro-23–Ser-117 form the PH domain. Residues Arg-268–His-302 adopt a coiled-coil conformation. Residues Glu-320 to Glu-326 carry the FFAT motif. Over residues Gln-332–Arg-344 the composition is skewed to basic and acidic residues. The disordered stretch occupies residues Gln-332 to Glu-355. The START domain maps to Asp-383–Ala-611. Residues Glu-466, Gln-487, Asn-524, and Tyr-572 each coordinate an N-acylsphing-4-enine.

The protein resides in the cytoplasm. The protein localises to the golgi apparatus. It localises to the endoplasmic reticulum. The enzyme catalyses N-hexadecanoylsphing-4-enine(in) = N-hexadecanoylsphing-4-enine(out). Functionally, may mediate the intracellular trafficking of ceramide in a non-vesicular manner. The chain is Ceramide transfer protein (cert1) from Xenopus tropicalis (Western clawed frog).